We begin with the raw amino-acid sequence, 567 residues long: Pyrethroid hydrolase Ces2e (567 aa).

The signal sequence occupies residues 1–36; sequence MAQTRAWKSIMPLESLPGWLNAVVWGLLLLFCQVQG. Position 37 is a pyrrolidone carboxylic acid (Q37). C105 and C132 form a disulfide bridge. Catalysis depends on S237, which acts as the Acyl-ester intermediate. C289 and C300 form a disulfide bridge. Residues E354 and H465 each act as charge relay system in the active site.

This sequence belongs to the type-B carboxylesterase/lipase family. As to expression, expressed in liver.

The protein resides in the microsome. The catalysed reaction is all-trans-retinyl hexadecanoate + H2O = all-trans-retinol + hexadecanoate + H(+). It carries out the reaction (-)-trans-permethrin + H2O = (3-phenoxyphenyl)methanol + (1S,3R)-3-(2,2-dichlorovinyl)-2,2-dimethylcyclopropanecarboxylate + H(+). In terms of biological role, carboxylesterase that catalyzes the hydrolysis of pyrethroids pesticides. Hydrolyzes trans-permethrin at a rate about 22-fold higher than cis-permethrin. Also hydrolyzes trans-cypermethrin. Hydrolyzes retinyl esters. The chain is Pyrethroid hydrolase Ces2e from Rattus norvegicus (Rat).